We begin with the raw amino-acid sequence, 675 residues long: Rho GTPase-activating protein 40 (675 aa).

Disordered stretches follow at residues 95-118 (RDEL…EAES) and 187-218 (KMSS…PGGL). The segment covering 103–116 (SGGNEGQLPEEGEA) has biased composition (acidic residues). One can recognise a Rho-GAP domain in the interval 323-522 (VPLDSLLEAD…IMVHYQDLLW (200 aa)).

In terms of biological role, GTPase activator for the Rho-type GTPases by converting them to an inactive GDP-bound state. This Homo sapiens (Human) protein is Rho GTPase-activating protein 40.